A 295-amino-acid chain; its full sequence is Protoheme IX farnesyltransferase (295 aa).

Helical transmembrane passes span 27 to 47 (IMYL…GNIH), 48 to 68 (PFIG…AGAI), 93 to 115 (IARS…VMMI), 119 to 136 (YLSG…SLVY), 147 to 167 (NIVI…TSVT), 175 to 195 (LILF…LSLL), 219 to 239 (IYIL…GIFL), 247 to 267 (TCAI…FVSI), and 275 to 295 (MFTY…ISSF).

The protein belongs to the UbiA prenyltransferase family. Protoheme IX farnesyltransferase subfamily.

It is found in the cell inner membrane. It catalyses the reaction heme b + (2E,6E)-farnesyl diphosphate + H2O = Fe(II)-heme o + diphosphate. Its pathway is porphyrin-containing compound metabolism; heme O biosynthesis; heme O from protoheme: step 1/1. Its function is as follows. Converts heme B (protoheme IX) to heme O by substitution of the vinyl group on carbon 2 of heme B porphyrin ring with a hydroxyethyl farnesyl side group. The polypeptide is Protoheme IX farnesyltransferase (Ehrlichia chaffeensis (strain ATCC CRL-10679 / Arkansas)).